The following is a 118-amino-acid chain: Small ribosomal subunit protein uS13 (118 aa).

Residues 91–118 (HRRSLPVRGQRTKTNARTRKGPRKPIKA) form a disordered region.

This sequence belongs to the universal ribosomal protein uS13 family. As to quaternary structure, part of the 30S ribosomal subunit. Forms a loose heterodimer with protein S19. Forms two bridges to the 50S subunit in the 70S ribosome.

Functionally, located at the top of the head of the 30S subunit, it contacts several helices of the 16S rRNA. In the 70S ribosome it contacts the 23S rRNA (bridge B1a) and protein L5 of the 50S subunit (bridge B1b), connecting the 2 subunits; these bridges are implicated in subunit movement. Contacts the tRNAs in the A and P-sites. The chain is Small ribosomal subunit protein uS13 from Francisella tularensis subsp. tularensis (strain FSC 198).